Consider the following 757-residue polypeptide: RNA-directed RNA polymerase catalytic subunit (757 aa).

A disordered region spans residues 50 to 82 (SEKGKWTTNTETGAPQLNPIDGPLPEDNEPSGY). The segment covering 55–64 (WTTNTETGAP) has biased composition (polar residues). 2 short sequence motifs (nuclear localization signal) span residues 187 to 195 (RKRRVRDNM) and 203 to 216 (RTIG…NKKS). The tract at residues 249 to 256 (RGFVYFVE) is promoter-binding site. Positions 286–483 (VRKMMTNSQD…GINMSKKKSY (198 aa)) constitute a RdRp catalytic domain.

The protein belongs to the influenza viruses polymerase PB1 family. In terms of assembly, influenza RNA polymerase is composed of three subunits: PB1, PB2 and PA. Interacts (via N-terminus) with PA (via C-terminus). Interacts (via C-terminus) with PB2 (via N-terminus); this interaction is essential for transcription initiation. In terms of processing, phosphorylated by host PRKCA.

Its subcellular location is the host nucleus. It is found in the host cytoplasm. It carries out the reaction RNA(n) + a ribonucleoside 5'-triphosphate = RNA(n+1) + diphosphate. Functionally, RNA-dependent RNA polymerase which is responsible for replication and transcription of virus RNA segments. The transcription of viral mRNAs occurs by a unique mechanism called cap-snatching. 5' methylated caps of cellular mRNAs are cleaved after 10-13 nucleotides by PA. In turn, these short capped RNAs are used as primers by PB1 for transcription of viral mRNAs. During virus replication, PB1 initiates RNA synthesis and copy vRNA into complementary RNA (cRNA) which in turn serves as a template for the production of more vRNAs. The polypeptide is RNA-directed RNA polymerase catalytic subunit (Influenza A virus (strain A/Silky Chicken/Hong Kong/SF189/2001 H5N1 genotype A)).